A 239-amino-acid chain; its full sequence is Homeobox-leucine zipper protein HOX12 (239 aa).

The tract at residues 22–65 is disordered; that stretch reads PEAATSGGEQKKARQRRRRKVKPEAAAALAGESGGDEQAKKRRL. The homeobox DNA-binding region spans 58–117; sequence EQAKKRRLSDEQARFLEMSFKKERKLETPRKVQLAAELGLDAKQVAVWFQNRRARHKSKL. Residues 107–168 adopt a coiled-coil conformation; it reads QNRRARHKSK…KLAAVAAATT (62 aa).

The protein belongs to the HD-ZIP homeobox family. Class I subfamily. Expressed in seedlings, roots, stems, leaf sheaths and panicles.

It localises to the nucleus. Functionally, probable transcription factor. The chain is Homeobox-leucine zipper protein HOX12 (HOX12) from Oryza sativa subsp. indica (Rice).